Reading from the N-terminus, the 239-residue chain is Ribonuclease 3 (239 aa).

Positions 12 to 137 constitute an RNase III domain; it reads RAKLEGLIGH…LIAAIYLDGG (126 aa). Glu50 contributes to the Mg(2+) binding site. Asp54 is a catalytic residue. The Mg(2+) site is built by Asp123 and Glu126. Residue Glu126 is part of the active site. A DRBM domain is found at 162 to 231; that stretch reads DAKTELQEWS…ATKMLEREGI (70 aa).

Belongs to the ribonuclease III family. As to quaternary structure, homodimer. The cofactor is Mg(2+).

The protein localises to the cytoplasm. The enzyme catalyses Endonucleolytic cleavage to 5'-phosphomonoester.. In terms of biological role, digests double-stranded RNA. Involved in the processing of primary rRNA transcript to yield the immediate precursors to the large and small rRNAs (23S and 16S). Processes some mRNAs, and tRNAs when they are encoded in the rRNA operon. Processes pre-crRNA and tracrRNA of type II CRISPR loci if present in the organism. This Rhizobium leguminosarum bv. trifolii (strain WSM2304) protein is Ribonuclease 3.